The chain runs to 311 residues: Ribonuclease Z (311 aa).

Zn(2+) is bound by residues histidine 63, histidine 65, aspartate 67, histidine 68, histidine 141, aspartate 212, and histidine 270. The active-site Proton acceptor is aspartate 67.

Belongs to the RNase Z family. Homodimer. The cofactor is Zn(2+).

It catalyses the reaction Endonucleolytic cleavage of RNA, removing extra 3' nucleotides from tRNA precursor, generating 3' termini of tRNAs. A 3'-hydroxy group is left at the tRNA terminus and a 5'-phosphoryl group is left at the trailer molecule.. In terms of biological role, zinc phosphodiesterase, which displays some tRNA 3'-processing endonuclease activity. Probably involved in tRNA maturation, by removing a 3'-trailer from precursor tRNA. This is Ribonuclease Z from Lactiplantibacillus plantarum (strain ATCC BAA-793 / NCIMB 8826 / WCFS1) (Lactobacillus plantarum).